Here is a 112-residue protein sequence, read N- to C-terminus: 2Fe-2S ferredoxin (112 aa).

The 103-residue stretch at 5–107 folds into the 2Fe-2S ferredoxin-type domain; it reads IKVTFIINDG…GIKVRIPATT (103 aa). [2Fe-2S] cluster contacts are provided by C42, C48, C51, and C88.

This sequence belongs to the adrenodoxin/putidaredoxin family. It depends on [2Fe-2S] cluster as a cofactor.

Its function is as follows. Ferredoxin are iron-sulfur proteins that transfer electrons in a wide variety of metabolic reactions. The chain is 2Fe-2S ferredoxin (fdxB) from Rickettsia conorii (strain ATCC VR-613 / Malish 7).